Reading from the N-terminus, the 360-residue chain is Vignain (360 aa).

Positions Met1–Ser20 are cleaved as a signal peptide. The propeptide at Phe21–Asp124 is activation peptide. Asn115 carries an N-linked (GlcNAc...) asparagine glycan. 3 cysteine pairs are disulfide-bonded: Cys147–Cys189, Cys181–Cys222, and Cys280–Cys332. The active site involves Cys150. Active-site residues include His286 and Asn307. The tract at residues Pro341 to Leu360 is disordered. Polar residues predominate over residues Lys344–Lys353. The propeptide at Ser354–Leu360 is removed in mature form. The segment at Lys357 to Leu360 is prevents secretion from ER.

It belongs to the peptidase C1 family. The potential N-glycosylation site at Asn-115 is not glycosylated.

Its subcellular location is the cytoplasmic vesicle. Its activity is regulated as follows. Low pH triggers activation of the protease and removal of the propeptide and the KDEL motif. Functionally, involved in programmed cell death. Shows a pronounced preference for hydrophobic residues in the P2 position and no obvious preference in the P1 position of the cleavage site. Accepts proline at the P1 and P1' positions. This chain is Vignain (CYSEP), found in Ricinus communis (Castor bean).